The chain runs to 119 residues: uncharacterized protein (119 aa).

The first 30 residues, 1–30 (MCPECFFLMLCFCGYCSSSSSSFRSSPVYG), serve as a signal peptide directing secretion.

This is an uncharacterized protein from Escherichia coli (strain UTI89 / UPEC).